Reading from the N-terminus, the 672-residue chain is Spermatid perinuclear RNA-binding protein (672 aa).

The region spanning 5-362 (RSFANDDRHV…ALKRPFEDGV (358 aa)) is the DZF domain. The disordered stretch occupies residues 348–370 (GTGSSALKRPFEDGVGDDKDPNK). The span at 356–370 (RPFEDGVGDDKDPNK) shows a compositional bias: basic and acidic residues. Residues 386–452 (DLMNALMRLN…AVKVLQAMGY (67 aa)) form the DRBM 1 domain. A disordered region spans residues 463-494 (VSSDEKSDNEGKNETVSSISSNNTGNSTADTS). The span at 465–475 (SDEKSDNEGKN) shows a compositional bias: basic and acidic residues. Over residues 477–490 (TVSSISSNNTGNST) the composition is skewed to low complexity. Residues 509 to 575 (SGKNPVMELN…ALAALEKLFS (67 aa)) form the DRBM 2 domain.

The protein resides in the cytoplasm. Its function is as follows. May be involved in normal spermatogenesis and sperm function. Binds to double-stranded DNA and RNA. This chain is Spermatid perinuclear RNA-binding protein (STRBP), found in Gallus gallus (Chicken).